The primary structure comprises 894 residues: MSEGQIPSSDVLGSQLGVGVQGASLYCPQENYTTKKQEKPQWLRPVDDTLAEDALDLHIVVKSLLCDTAIRYISDDKVLQESDADDDLITSDIDEDTDNQGDTSIVVNPVIPVVPKDVHFFKKVDVGNDSMFGVNCDTPVSFQDYIPSDLLRNLDDTLQESTNSSRPMQDAFFWDPTVANRLDSQYIQTASDLRNYRDGTEIIAYASGKTGSVLNIAVLTRQNTLHLNRHNNVTSIELHSPIKSIKIPGASESIGRRSNLVGIITENSFQIFRIESVHSRSCDVMVSSSEPLYFVEIDDLQVVDFAFNPWDLQQFAIIDIKGNWSIGRIPKNFNNNNKRKLQLIDNLHGTIFDPEELSSWKRIEWFSHFQKILVFDRSKMIEIDFMNNWQTEVVQAKAWSNIRDYKRIDDKNGILLTSREIIIVGASESNDPVRRISWKHDLDPDDTTLRITVQKVKKPDHILLVAFVYSMRHKRIYMHVFSHRKANLFQSLGCSTVLEIPGGTPTGIETILTLDHIDDESRREEDADENFELVVDFLVKLRNSSEVYYYALSNTQNSEPNKQETPIIVDHPEWASLFNNADEREKESIGALVSQIKLKERERISRVQNLIEHENSHDEDKYLQDLGYRLSIATNELLESWQKTKDESILSGSLSHSKLKNLLENSDSFASIPEFSSLLDQFFQYYQDQDVTFIGFEKLLHLFLHEDVPGLDIFYNKLLQCWVLVSPQAELLTKEIVKDIIWSLARLEKPSLFEPIQNEISRSLSGPYQDIISSWDMDDINEEDESNEFNFDSQFSAPFNGRPPFNLNSQSQIPTIKSSQSSGLARRKRILKTQSQKATPLSQSTQNLSVLPDSMTPAFTLMQPPSSQISFVNDSQPRNSQKAKKKKKRIRGFG.

The interval 803 to 894 (PPFNLNSQSQ…KKKKRIRGFG (92 aa)) is disordered. 3 stretches are compositionally biased toward polar residues: residues 806-823 (NLNSQSQIPTIKSSQSSG), 832-849 (KTQSQKATPLSQSTQNLS), and 863-880 (QPPSSQISFVNDSQPRNS). Residues 881-894 (QKAKKKKKRIRGFG) show a composition bias toward basic residues.

As to quaternary structure, component of the core factor (CF) complex, which consists of RRN6, RRN7 and RRN11. The CF heterotrimer may further dimerize to form a hexamer. RRN6 interacts with RRN7, RRN11 and RRN9.

It is found in the cytoplasm. The protein localises to the nucleus. The protein resides in the nucleolus. Its function is as follows. Acts as a component of the core factor (CF) complex which is essential for the initiation of rDNA transcription by RNA polymerase I. After binding of UAF (upstream activation factor) to an upstream element of the promoter, CF is recruited in a SPT15/TBP-dependent manner to form a preinitiation complex. The protein is RNA polymerase I-specific transcription initiation factor RRN6 (RRN6) of Saccharomyces cerevisiae (strain ATCC 204508 / S288c) (Baker's yeast).